A 286-amino-acid chain; its full sequence is ATP synthase gamma chain (286 aa).

It belongs to the ATPase gamma chain family. F-type ATPases have 2 components, CF(1) - the catalytic core - and CF(0) - the membrane proton channel. CF(1) has five subunits: alpha(3), beta(3), gamma(1), delta(1), epsilon(1). CF(0) has three main subunits: a, b and c.

It is found in the cell membrane. In terms of biological role, produces ATP from ADP in the presence of a proton gradient across the membrane. The gamma chain is believed to be important in regulating ATPase activity and the flow of protons through the CF(0) complex. The sequence is that of ATP synthase gamma chain from Malacoplasma penetrans (strain HF-2) (Mycoplasma penetrans).